Reading from the N-terminus, the 1195-residue chain is Zinc finger and BTB domain-containing protein 38 (1195 aa).

Residues 33–100 (CDVTIIVEDT…IYSSTVVVKR (68 aa)) enclose the BTB domain. Residue Lys43 forms a Glycyl lysine isopeptide (Lys-Gly) (interchain with G-Cter in SUMO2) linkage. At Ser130 the chain carries Phosphoserine. Residues Lys145, Lys148, Lys151, and Lys259 each participate in a glycyl lysine isopeptide (Lys-Gly) (interchain with G-Cter in SUMO2) cross-link. The interval 264–334 (RKPKTFSIPQ…QSSDVPGPPA (71 aa)) is disordered. A compositionally biased stretch (polar residues) spans 270–280 (SIPQDSDSATE). An interaction with CBFA2T3 region spans residues 300 to 523 (PAAVLTRSKS…RRYQCIFCLE (224 aa)). Position 309 is a phosphoserine (Ser309). Residues 314 to 323 (GDVHFSREDE) show a composition bias toward basic and acidic residues. The segment at 342–364 (YNCSCCSKAFDSSTLLSAHMQLH) adopts a C2H2-type 1 zinc-finger fold. The C2H2-type 2; degenerate zinc-finger motif lies at 371 to 395 (LVCKYCNKQFTTLNRLDRHEQICMR). C2H2-type zinc fingers lie at residues 460 to 482 (YSCVVCKRSYVTLSSLRRHANVH), 488 to 510 (YPCHYCNKVFALAEYRTRHEIWH), and 516 to 539 (YQCIFCLETFMTYYILKNHQKSFH). Residues Lys550, Lys557, Lys754, Lys758, Lys763, Lys804, Lys814, Lys821, Lys842, Lys850, and Lys857 each participate in a glycyl lysine isopeptide (Lys-Gly) (interchain with G-Cter in SUMO2) cross-link. Residues 745–804 (SDPAVSQSLKDDSKPEPDKVGRFASRPKSIKEKKKTTSHTRGEIPEESNYVADPGGSLSK) are disordered. The segment covering 753 to 765 (LKDDSKPEPDKVG) has biased composition (basic and acidic residues). Disordered stretches follow at residues 871–891 (QEEPLPQGNDPEPSGDSPLGL) and 903–922 (FDDASDQDSTDKPWRPYYNY). Glycyl lysine isopeptide (Lys-Gly) (interchain with G-Cter in SUMO2) cross-links involve residues Lys923, Lys964, Lys969, Lys977, Lys981, Lys991, Lys1017, and Lys1026. 5 consecutive C2H2-type zinc fingers follow at residues 1010 to 1032 (YACELCAKQFQSPSTLKMHMRCH), 1038 to 1060 (YQCKTCGRCFSVQGNLQKHERIH), 1066 to 1088 (FVCQYCNKAFTLNETLKIHERIH), 1094 to 1116 (YHCQFCFQRFLYLSTKRNHEQRH), and 1125 to 1147 (YACFQCPKICKTAAALGMHQKKH). Residues Lys1109, Lys1132, Lys1135, Lys1150, and Lys1183 each participate in a glycyl lysine isopeptide (Lys-Gly) (interchain with G-Cter in SUMO2) cross-link.

In terms of assembly, interacts with CBFA2T3. Interacts with ZBTB4. Interacts with RBBP6. In terms of processing, ubiquitinated by RBBP6; leading to its degradation by the proteasome.

Its subcellular location is the nucleus. It localises to the chromosome. Functionally, transcriptional regulator with bimodal DNA-binding specificity. Binds with a higher affinity to methylated CpG dinucleotides in the consensus sequence 5'-CGCG-3' but can also bind to E-box elements (5'-CACGTG-3'). Can also bind specifically to a single methyl-CpG pair. Represses transcription in a methyl-CpG-dependent manner. Plays an important role in regulating DNA replication and common fragile sites (CFS) stability in a RBBP6- and MCM10-dependent manner; represses expression of MCM10 which plays an important role in DNA-replication. Acts as a transcriptional activator. May be involved in the differentiation and/or survival of late postmitotic neurons. This chain is Zinc finger and BTB domain-containing protein 38, found in Homo sapiens (Human).